Reading from the N-terminus, the 592-residue chain is Bifunctional purine biosynthesis protein ADE17 (592 aa).

An MGS-like domain is found at 1–147 (MANYTKTAIL…KNHARVTILS (147 aa)). Residues 35 to 38 (SGGT), 65 to 68 (RVKT), 102 to 103 (CN), and 126 to 127 (DI) contribute to the IMP site. Residue Lys138 is the Proton donor/acceptor; for FAICAR cyclization activity of the active site. Residues 206 to 207 (RY), His267, Gly315, Asp338, Asn430, and Arg450 contribute to the 5-amino-1-(5-phospho-beta-D-ribosyl)imidazole-4-carboxamide site. His267 (proton acceptor; for AICAR formyltransferase activity) is an active-site residue. Ile451 is a binding site for (6R)-10-formyltetrahydrofolate. Phe541 serves as a coordination point for 5-amino-1-(5-phospho-beta-D-ribosyl)imidazole-4-carboxamide. Residues Asp546 and 565 to 566 (SV) each bind (6R)-10-formyltetrahydrofolate. Residue Arg588 participates in 5-amino-1-(5-phospho-beta-D-ribosyl)imidazole-4-carboxamide binding.

The protein belongs to the PurH family. As to quaternary structure, homodimer.

It localises to the cytoplasm. The protein localises to the cytosol. The enzyme catalyses (6R)-10-formyltetrahydrofolate + 5-amino-1-(5-phospho-beta-D-ribosyl)imidazole-4-carboxamide = 5-formamido-1-(5-phospho-D-ribosyl)imidazole-4-carboxamide + (6S)-5,6,7,8-tetrahydrofolate. It catalyses the reaction IMP + H2O = 5-formamido-1-(5-phospho-D-ribosyl)imidazole-4-carboxamide. The protein operates within purine metabolism; IMP biosynthesis via de novo pathway; 5-formamido-1-(5-phospho-D-ribosyl)imidazole-4-carboxamide from 5-amino-1-(5-phospho-D-ribosyl)imidazole-4-carboxamide (10-formyl THF route): step 1/1. Its pathway is purine metabolism; IMP biosynthesis via de novo pathway; IMP from 5-formamido-1-(5-phospho-D-ribosyl)imidazole-4-carboxamide: step 1/1. In terms of biological role, bifunctional enzyme that catalyzes the last two steps of purine biosynthesis. Acts as a transformylase that incorporates a formyl group to the AMP analog AICAR (5-amino-1-(5-phospho-beta-D-ribosyl)imidazole-4-carboxamide) to produce the intermediate formyl-AICAR (FAICAR). Also catalyzes the cyclization of FAICAR to IMP. This chain is Bifunctional purine biosynthesis protein ADE17, found in Saccharomyces cerevisiae (strain ATCC 204508 / S288c) (Baker's yeast).